The following is a 508-amino-acid chain: Lysine--tRNA ligase (508 aa).

Positions 418 and 425 each coordinate Mg(2+).

Belongs to the class-II aminoacyl-tRNA synthetase family. As to quaternary structure, homodimer. Requires Mg(2+) as cofactor.

It localises to the cytoplasm. The enzyme catalyses tRNA(Lys) + L-lysine + ATP = L-lysyl-tRNA(Lys) + AMP + diphosphate. The sequence is that of Lysine--tRNA ligase from Burkholderia ambifaria (strain MC40-6).